Consider the following 71-residue polypeptide: Pro-MCH (71 aa).

A signal peptide spans 1–20 (AKMNLSSYILILTFSLFSQG).

It belongs to the melanin-concentrating hormone family.

The protein localises to the secreted. The sequence is that of Pro-MCH (PMCH) from Hylobates lar (Lar gibbon).